The primary structure comprises 339 residues: DNA-directed RNA polymerase subunit alpha (339 aa).

The alpha N-terminal domain (alpha-NTD) stretch occupies residues 1 to 235 (MTIQKNWQEL…DQLNVFVNFE (235 aa)). The tract at residues 251 to 339 (FNPAFLKKVD…ELAKRFEDHY (89 aa)) is alpha C-terminal domain (alpha-CTD).

It belongs to the RNA polymerase alpha chain family. Homodimer. The RNAP catalytic core consists of 2 alpha, 1 beta, 1 beta' and 1 omega subunit. When a sigma factor is associated with the core the holoenzyme is formed, which can initiate transcription.

The catalysed reaction is RNA(n) + a ribonucleoside 5'-triphosphate = RNA(n+1) + diphosphate. In terms of biological role, DNA-dependent RNA polymerase catalyzes the transcription of DNA into RNA using the four ribonucleoside triphosphates as substrates. The sequence is that of DNA-directed RNA polymerase subunit alpha from Rhodopseudomonas palustris (strain BisB18).